The sequence spans 470 residues: E3 ubiquitin-protein ligase TRAIP (470 aa).

The segment at cysteine 7–arginine 50 adopts an RING-type; atypical zinc-finger fold. A coiled-coil region spans residues alanine 76–threonine 277. Positions leucine 211–glutamine 470 are interaction with CYLD. A PIP-box motif is present at residues glutamine 461–glutamine 470.

This sequence belongs to the TRAIP family. As to quaternary structure, interacts (via PIP-box) with PCNA. Binds TRAF1, TRAF2, TRAF3, TRAF5 and TRAF6 is part of the receptor-TRAF signaling complex. May interact with CYLD; the C-terminus interacts with CYLD, however the interaction was not detected with the full-length protein. Interacts with POLK and POLN. Interacts with UIMC1. Post-translationally, autoubiquitinated. Sumoylated; sumoylation is required for nuclear localization. Sumoylation increases protein stability, possibly by preventing ubiquitination. In terms of tissue distribution, detected in testis and thymus, and at lower levels in spleen.

The protein resides in the nucleus. It is found in the nucleoplasm. It localises to the nucleolus. The protein localises to the chromosome. Its subcellular location is the cytoplasm. The protein resides in the perinuclear region. It catalyses the reaction S-ubiquitinyl-[E2 ubiquitin-conjugating enzyme]-L-cysteine + [acceptor protein]-L-lysine = [E2 ubiquitin-conjugating enzyme]-L-cysteine + N(6)-ubiquitinyl-[acceptor protein]-L-lysine.. It functions in the pathway protein modification; protein ubiquitination. E3 ubiquitin ligase required to protect genome stability in response to replication stress. Acts as a key regulator of interstrand cross-link repair, which takes place when both strands of duplex DNA are covalently tethered together, thereby blocking replication and transcription. During mitosis, controls the choice between the two pathways of replication-coupled interstrand-cross-link repair by mediating ubiquitination of MCM7 subunit of the CMG helicase complex. Short ubiquitin chains on MCM7 promote recruitment of DNA glycosylase NEIL3. If the interstrand cross-link cannot be cleaved by NEIL3, the ubiquitin chains continue to grow on MCM7, promoting the unloading of the CMG helicase complex by the VCP/p97 ATPase, enabling the Fanconi anemia DNA repair pathway. Only catalyzes ubiquitination of MCM7 when forks converge. Also involved in the repair of covalent DNA-protein cross-links (DPCs) during DNA synthesis: promotes ubiquitination of DPCs, leading to their degradation by the proteasome. Has also been proposed to play a role in promoting translesion synthesis by mediating the assembly of 'Lys-63'-linked poly-ubiquitin chains on the Y-family polymerase POLN in order to facilitate bypass of DNA lesions and preserve genomic integrity. The function in translesion synthesis is however controversial. Acts as a regulator of the spindle assembly checkpoint. Also acts as a negative regulator of innate immune signaling by inhibiting activation of NF-kappa-B mediated by TNF. Negatively regulates TLR3/4- and RIG-I-mediated IRF3 activation and subsequent IFNB1 production and cellular antiviral response by promoting 'Lys-48'-linked polyubiquitination of TNK1 leading to its proteasomal degradation. This Mus musculus (Mouse) protein is E3 ubiquitin-protein ligase TRAIP.